Consider the following 1137-residue polypeptide: MVELKMGDHNVEATTWDPGDSKDWSVPIKPLTEKWKLVPAFLQVKGLVKQHIDSFNHFINVDIKKIVKANELVTSGADPLFYLKYLDVRVGKPDIDDGFNITKATTPHECRLRDTTYSAPITVDIEYTRGTQRIKRNNLLIGRMPLMLRCSNCALTGKSEFELSKLNECPLDPGGYFVVRGQEKVILIQEQLSWNKMLTEDFNGVVQCQVTSSTHEKKSRTLVLSKHGKYYLKHNSMTDDIPIVVIFKALGVVSDQEIQSLIGIDSKSQNRFGASLIDAYNLKVFTQQRALEYMGSKLVVKRFQSATTKTPSEEARELLLTTILAHVPVDNFNLQMKAIYVSMMVRRVMAAELDKTLFDDRDYYGNKRLELAGSLLSMMFEDLFKRMNWELKTIADKNIPKVKAAQFDVVKHMRAAQITAGLESAISSGNWTIKRFKMERAGVTQVLSRLSYISALGMMTRVNSQFEKTRKVSGPRSLQPSQWGMLCPSDTPEGEACGLVKNLALMTHITTEVEERPVMIVAFNAGVEDIREVSGNPINNPNVFLVFINGNVLGLTLNHKHLVRNLRYMRRKGRMGSYVSVHTSYTQRCIYIHTDGGRLCRPYVIVENRRPLVKQHHLDELNRGIRKFDDFLLDGLIEYLDVNEENDSFIAWNEDQIEDRTTHLEIEPFTLLGVCAGLVPYPHHNQSPRNTYQCAMGKQAMGMIGYNQKNRIDSLMYNLVYPHAPMVKSKTIELTNFDKLPAGQNATVAVMSYSGYDIEDALILNKASIDRGYGRCLVYKNSKCTVKRYANQTFDRIMGPMKDALTNKVIFKHDVLDTDGIVAPGEQVQNKQIMINKEMPAVTSMNPLQGQSAQVPYTAVPISYKGPEPSYIERVMVSANAEEDFLIKILLRQTRIPEIGDKFSSRHGQKGVTGLIVEQEDMPFNDFGICPDMIMNPHGFPSRMTVGKTLELLGGKAGLLEGKFHYGTAFGGSKVEDIQAELERHGFNYVGKDFFYSGITGTPLEAYIYSGPVYYQKLKHMVQDKMHARARGPKAVLTRQPTQGRSREGGLRLGEMERDCLISYGASMLIMERLMISSDAFEVDVCRTCGRMAYCSWCHFCQSSANVSKISMPYACKLLFQELTSMNVVPKMILENY.

The C4-type zinc finger occupies 1084–1099; that stretch reads DVCRTCGRMAYCSWCH. Cys1086, Cys1089, Cys1098, and Cys1101 together coordinate Zn(2+).

It belongs to the RNA polymerase beta chain family. As to quaternary structure, component of the RNA polymerase III (Pol III) complex consisting of 17 subunits.

The protein resides in the nucleus. It carries out the reaction RNA(n) + a ribonucleoside 5'-triphosphate = RNA(n+1) + diphosphate. Functionally, DNA-dependent RNA polymerase catalyzes the transcription of DNA into RNA using the four ribonucleoside triphosphates as substrates. Second largest core component of RNA polymerase III which synthesizes small RNAs, such as 5S rRNA and tRNAs. Proposed to contribute to the polymerase catalytic activity and forms the polymerase active center together with the largest subunit. Pol III is composed of mobile elements and Polr3B is part of the core element with the central large cleft and probably a clamp element that moves to open and close the cleft. The sequence is that of DNA-directed RNA polymerase III subunit RPC2 from Drosophila melanogaster (Fruit fly).